A 1025-amino-acid chain; its full sequence is Multidrug resistance protein MdtC (1025 aa).

12 helical membrane-spanning segments follow: residues F3–L23, E333–L353, I360–C380, L387–L407, V431–L451, V469–M489, L528–P548, V853–S873, V875–L895, L897–V917, P953–G973, and I984–V1004.

This sequence belongs to the resistance-nodulation-cell division (RND) (TC 2.A.6) family. MdtC subfamily. Part of a tripartite efflux system composed of MdtA, MdtB and MdtC. MdtC forms a heteromultimer with MdtB.

Its subcellular location is the cell inner membrane. Its function is as follows. The MdtABC tripartite complex confers resistance against novobiocin and deoxycholate. The sequence is that of Multidrug resistance protein MdtC from Escherichia coli O9:H4 (strain HS).